Reading from the N-terminus, the 195-residue chain is Small ribosomal subunit protein uS5 (195 aa).

The segment at 1 to 20 is disordered; it reads MAREREGGGRGRREDREERD. Positions 23-86 constitute an S5 DRBM domain; it reads FVDKLVHINR…EAAKRGLIRV (64 aa). The disordered stretch occupies residues 161-195; the sequence is DSPRSVAARRGIKVSTLQSRRRDADPADQSEAAVA.

The protein belongs to the universal ribosomal protein uS5 family. Part of the 30S ribosomal subunit. Contacts proteins S4 and S8.

Functionally, with S4 and S12 plays an important role in translational accuracy. Its function is as follows. Located at the back of the 30S subunit body where it stabilizes the conformation of the head with respect to the body. The protein is Small ribosomal subunit protein uS5 of Methylobacterium radiotolerans (strain ATCC 27329 / DSM 1819 / JCM 2831 / NBRC 15690 / NCIMB 10815 / 0-1).